We begin with the raw amino-acid sequence, 287 residues long: Shikimate dehydrogenase (NADP(+)) (287 aa).

Residues 20–22 and T67 contribute to the shikimate site; that span reads SRS. Catalysis depends on K71, which acts as the Proton acceptor. E84 lines the NADP(+) pocket. The shikimate site is built by N93 and D108. Residues 132–136 and M226 contribute to the NADP(+) site; that span reads GAGGA. Y228 provides a ligand contact to shikimate. NADP(+) is bound at residue G250.

It belongs to the shikimate dehydrogenase family. Homodimer.

It carries out the reaction shikimate + NADP(+) = 3-dehydroshikimate + NADPH + H(+). It functions in the pathway metabolic intermediate biosynthesis; chorismate biosynthesis; chorismate from D-erythrose 4-phosphate and phosphoenolpyruvate: step 4/7. Its function is as follows. Involved in the biosynthesis of the chorismate, which leads to the biosynthesis of aromatic amino acids. Catalyzes the reversible NADPH linked reduction of 3-dehydroshikimate (DHSA) to yield shikimate (SA). The protein is Shikimate dehydrogenase (NADP(+)) of Bordetella petrii (strain ATCC BAA-461 / DSM 12804 / CCUG 43448).